The sequence spans 1923 residues: Endoribonuclease Dicer (1923 aa).

A Helicase ATP-binding domain is found at leucine 51–glutamate 227. An ATP-binding site is contributed by leucine 64 to threonine 71. Residues aspartate 175–histidine 178 carry the DECH box motif. A required for interaction with PRKRA and TARBP2 region spans residues aspartate 256–aspartate 595. A disordered region spans residues valine 410–asparagine 433. Phosphoserine is present on residues serine 413 and serine 415. Acidic residues predominate over residues aspartate 414–glutamate 425. One can recognise a Helicase C-terminal domain in the interval asparagine 433–glutamate 602. The 93-residue stretch at alanine 629–tyrosine 721 folds into the Dicer dsRNA-binding fold domain. Positions lysine 894–proline 1041 constitute a PAZ domain. Residues serine 1015 and serine 1160 each carry the phosphoserine modification. Polar residues-rich tracts occupy residues asparagine 1246–serine 1255 and serine 1277–leucine 1290. The disordered stretch occupies residues asparagine 1246–glycine 1291. The 129-residue stretch at alanine 1276–threonine 1404 folds into the RNase III 1 domain. Glutamate 1316, glutamate 1396, and glutamate 1399 together coordinate Mg(2+). Phosphoserine occurs at positions 1461, 1469, and 1471. The region spanning phenylalanine 1667–glycine 1825 is the RNase III 2 domain. Mg(2+) contacts are provided by glutamate 1706, aspartate 1811, and glutamate 1814. The 63-residue stretch at serine 1853–alanine 1915 folds into the DRBM domain. Serine 1869 bears the Phosphoserine mark.

The protein belongs to the helicase family. Dicer subfamily. Component of the RISC loading complex (RLC), or micro-RNA (miRNA) loading complex (miRLC), which is composed of DICER1, AGO2 and TARBP2; DICER1 and TARBP2 are required to process precursor miRNAs (pre-miRNAs) to mature miRNAs and then load them onto AGO2. Note that the trimeric RLC/miRLC is also referred to as RISC. Interacts with DHX9, AGO1, PIWIL1 and PRKRA. Interacts with AGO2, TARBP2, EIF6, MOV10 and RPL7A (60S ribosome subunit); they form a large RNA-induced silencing complex (RISC). Interacts with BCDIN3D. Interacts (via Dicer dsRNA-binding fold domain) with ALOX5 (via PLAT domain); this interaction enhances arachidonate 5-lipoxygenase activity and modifies the miRNA precursor processing activity of DICER1. Mg(2+) is required as a cofactor. Requires Mn(2+) as cofactor.

It is found in the cytoplasm. The enzyme catalyses Endonucleolytic cleavage to 5'-phosphomonoester.. Its function is as follows. Double-stranded RNA (dsRNA) endoribonuclease playing a central role in short dsRNA-mediated post-transcriptional gene silencing. Cleaves naturally occurring long dsRNAs and short hairpin pre-microRNAs (miRNA) into fragments of twenty-one to twenty-three nucleotides with 3' overhang of two nucleotides, producing respectively short interfering RNAs (siRNA) and mature microRNAs. SiRNAs and miRNAs serve as guide to direct the RNA-induced silencing complex (RISC) to complementary RNAs to degrade them or prevent their translation. Gene silencing mediated by siRNAs, also called RNA interference, controls the elimination of transcripts from mobile and repetitive DNA elements of the genome but also the degradation of exogenous RNA of viral origin for instance. The miRNA pathway on the other side is a mean to specifically regulate the expression of target genes. The sequence is that of Endoribonuclease Dicer (DICER1) from Bos taurus (Bovine).